A 203-amino-acid polypeptide reads, in one-letter code: Recombination protein RecR (203 aa).

The C4-type zinc-finger motif lies at 56–71 (CTVCGNVSDDERCRIC). The Toprim domain maps to 79 to 179 (SVVCVVEEPK…TVTRIASGLP (101 aa)).

It belongs to the RecR family.

Functionally, may play a role in DNA repair. It seems to be involved in an RecBC-independent recombinational process of DNA repair. It may act with RecF and RecO. This is Recombination protein RecR from Mycobacterium leprae (strain TN).